We begin with the raw amino-acid sequence, 558 residues long: Protein shisa-7 (558 aa).

An N-terminal signal peptide occupies residues 1 to 22 (MPALLLLGTVALLASAAGPAGA). The Extracellular segment spans residues 23–189 (RPSNDTSSVA…GGEGPGGSTA (167 aa)). The N-linked (GlcNAc...) asparagine glycan is linked to Asn26. Disordered regions lie at residues 53-79 (GGSAAGTSANATKTSPASGTGAAARAP) and 142-181 (TPPPLAGGAGGAGGAGGGPGPGQAGWLEGGRAGGAGGRGG). Low complexity predominate over residues 57-77 (AGTSANATKTSPASGTGAAAR). Residues 148–181 (GGAGGAGGAGGGPGPGQAGWLEGGRAGGAGGRGG) show a composition bias toward gly residues. Residues 154–175 (GGAGGGPGPGQAGWLEGGRAGG) are GRID. The chain crosses the membrane as a helical span at residues 190–210 (YVVCGVISFALAVGVGAKVAF). Over 211 to 558 (SKASRAPRAH…RTASKNEVTV (348 aa)) the chain is Cytoplasmic. The tract at residues 236–263 (QAGPATRPDRARSSSLTPGLGGPDSMAP) is disordered. Ser438 is subject to Phosphoserine. The interval 443–506 (RQSREHLLSP…HHHHALHGSP (64 aa)) is disordered. Positions 453-462 (PRSPALPPDP) are enriched in pro residues. Over residues 466-477 (ASLAASHSNLLL) the composition is skewed to low complexity. A Phosphothreonine modification is found at Thr532. A PDZ-binding motif is present at residues 555–558 (EVTV).

Belongs to the shisa family. Interacts with GABA(A)R (GABA type A receptor) subunits GABRA1, GABRA2 and GABRG2; the interaction is direct. Does not interact with GABRB2 and GABRB3 subunits. Interacts with AMPAR subunits GRIA1, GRIA2 and GRIA3 and AMPAR auxiliary proteins SHISA6 and SHISA7 in heterologous cells. Interacts (via PDZ-binding motif) with DLG4/PSD-95 (via PDZ domain)in heterologous cells; the interaction is direct. In terms of processing, N-glycosylated. In terms of tissue distribution, mainly expressed in neurons. Highly expressed in brain structures including cortex, striatum, olfactory bulb, amygdala hippocampus CA1-3 and dentate gyrus (at protein level).

It localises to the postsynaptic density membrane. Functionally, transmembrane protein that regulates gamma-aminobutyric acid type A receptor (GABA(A)R) trafficking, channel deactivation kinetics and pharmacology, necessary for fast inhibitory transmission in the brain. Enhances the action of benzodiazepine, a primary GABA(A)Rs target drug, in the brain. May affect channel kinetics of AMPA-type glutamate receptors (AMPAR), the brain's main excitatory neurotransmitter, necessary for synaptic hippocampal plasticity, and memory recall. May regulate the induction and maintenance of long-term potentiation at Schaffer collaterals/CA3-CA1 excitatory synapses. This Mus musculus (Mouse) protein is Protein shisa-7.